The primary structure comprises 354 residues: L-Lys-D/L-Arg epimerase (354 aa).

Residues threonine 135 and lysine 160–lysine 162 each bind substrate. Positions 190, 215, and 240 each coordinate Mg(2+). Residues lysine 265, aspartate 295, and aspartate 318 to aspartate 320 each bind substrate.

It belongs to the mandelate racemase/muconate lactonizing enzyme family. The cofactor is Mg(2+).

Functionally, catalyzes the epimerization of L-Lys-L-Arg to L-Lys-D-Arg (in vitro). Catalyzes the epimerization of positively charged dipeptides, with a preference for substrates with a basic amino acid in the second position. Has epimerase activity with L-Lys-L-Lys, L-Arg-L-Arg, L-Val-L-Arg, L-Val-L-Lys and L-Ala-L-Arg (in vitro). The sequence is that of L-Lys-D/L-Arg epimerase from Desulforapulum autotrophicum (strain ATCC 43914 / DSM 3382 / VKM B-1955 / HRM2) (Desulfobacterium autotrophicum).